A 506-amino-acid polypeptide reads, in one-letter code: Bifunctional purine biosynthesis protein PurH (506 aa).

The 146-residue stretch at 1 to 146 folds into the MGS-like domain; the sequence is MARLALLSVS…KNFAHLTVLC (146 aa).

Belongs to the PurH family.

The enzyme catalyses (6R)-10-formyltetrahydrofolate + 5-amino-1-(5-phospho-beta-D-ribosyl)imidazole-4-carboxamide = 5-formamido-1-(5-phospho-D-ribosyl)imidazole-4-carboxamide + (6S)-5,6,7,8-tetrahydrofolate. It carries out the reaction IMP + H2O = 5-formamido-1-(5-phospho-D-ribosyl)imidazole-4-carboxamide. The protein operates within purine metabolism; IMP biosynthesis via de novo pathway; 5-formamido-1-(5-phospho-D-ribosyl)imidazole-4-carboxamide from 5-amino-1-(5-phospho-D-ribosyl)imidazole-4-carboxamide (10-formyl THF route): step 1/1. It functions in the pathway purine metabolism; IMP biosynthesis via de novo pathway; IMP from 5-formamido-1-(5-phospho-D-ribosyl)imidazole-4-carboxamide: step 1/1. The sequence is that of Bifunctional purine biosynthesis protein PurH from Trichormus variabilis (strain ATCC 29413 / PCC 7937) (Anabaena variabilis).